A 234-amino-acid chain; its full sequence is Urease subunit alpha (234 aa).

The segment at 1-102 (MKLTPKELDK…LVTIHTPVEA (102 aa)) is urease gamma. Positions 103-234 (GSDKLAPGEV…GTINCGCDNK (132 aa)) are urease beta.

This sequence in the N-terminal section; belongs to the urease gamma subunit family. In the C-terminal section; belongs to the urease beta subunit family. Heterohexamer of 3 UreA (alpha) and 3 UreB (beta) subunits.

Its subcellular location is the cytoplasm. The catalysed reaction is urea + 2 H2O + H(+) = hydrogencarbonate + 2 NH4(+). It functions in the pathway nitrogen metabolism; urea degradation; CO(2) and NH(3) from urea (urease route): step 1/1. The sequence is that of Urease subunit alpha from Helicobacter heilmannii.